The primary structure comprises 318 residues: Acetyl-coenzyme A carboxylase carboxyl transferase subunit alpha (318 aa).

The CoA carboxyltransferase C-terminal domain maps to 36-293; the sequence is EIDRLKEKST…KTRLSEQLDQ (258 aa).

Belongs to the AccA family. In terms of assembly, acetyl-CoA carboxylase is a heterohexamer composed of biotin carboxyl carrier protein (AccB), biotin carboxylase (AccC) and two subunits each of ACCase subunit alpha (AccA) and ACCase subunit beta (AccD).

It is found in the cytoplasm. It catalyses the reaction N(6)-carboxybiotinyl-L-lysyl-[protein] + acetyl-CoA = N(6)-biotinyl-L-lysyl-[protein] + malonyl-CoA. It participates in lipid metabolism; malonyl-CoA biosynthesis; malonyl-CoA from acetyl-CoA: step 1/1. Functionally, component of the acetyl coenzyme A carboxylase (ACC) complex. First, biotin carboxylase catalyzes the carboxylation of biotin on its carrier protein (BCCP) and then the CO(2) group is transferred by the carboxyltransferase to acetyl-CoA to form malonyl-CoA. In Teredinibacter turnerae (strain ATCC 39867 / T7901), this protein is Acetyl-coenzyme A carboxylase carboxyl transferase subunit alpha.